The chain runs to 246 residues: MYTRYSYNPALGRTYVYDNKFYKNLGSVIKNAKRKEHLLQHEIEERTLDPLERYVVAEDPFLGPGKNQKLTLFKEIRIVKPDTMKLVVNWSGKEFLRETWTRFMEDSFPIVNDQEIMDVFLVINMRPTRPNRCFRFLAQHALRCDPDYVPHEVIRIVEPVYVGTNNEYRISLAKKGGGCPVMNLHSEYTNSFEEFINRVIWENFYKPIVYVGTDSGEEEEILLELSLVFKIKEFAPDAPLYNGPAY.

The protein belongs to the polyhedrin family.

In terms of biological role, major component of the virus occlusion bodies, which are large proteinaceous structures (polyhedra), that protect the virus from the outside environment for extended periods until they are ingested by insect larvae. The chain is Polyhedrin (PH) from Spodoptera exigua nuclear polyhedrosis virus (strain US) (SeMNPV).